A 701-amino-acid chain; its full sequence is Polyribonucleotide nucleotidyltransferase (701 aa).

Mg(2+)-binding residues include D487 and D493. The KH domain occupies 554 to 613 (PTMIAMKIDTDKIRDVIGKGGATIRAICEETKASIDIEDDGSIKIFGETKEAAEAARQRV). The region spanning 623-691 (GKIYVGKVER…NRGRIKLSIK (69 aa)) is the S1 motif domain.

Belongs to the polyribonucleotide nucleotidyltransferase family. Component of the RNA degradosome, which is a multiprotein complex involved in RNA processing and mRNA degradation. Mg(2+) serves as cofactor.

Its subcellular location is the cytoplasm. The catalysed reaction is RNA(n+1) + phosphate = RNA(n) + a ribonucleoside 5'-diphosphate. In terms of biological role, involved in mRNA degradation. Catalyzes the phosphorolysis of single-stranded polyribonucleotides processively in the 3'- to 5'-direction. In Pseudomonas putida (strain W619), this protein is Polyribonucleotide nucleotidyltransferase.